We begin with the raw amino-acid sequence, 504 residues long: Calcium/calmodulin-dependent protein kinase type II (504 aa).

Positions 65–351 (YQLIENLGDG…IHQFFQHPWI (287 aa)) constitute a Protein kinase domain. ATP is bound by residues 71 to 79 (LGDGAFSQV) and Lys94. The active-site Proton acceptor is the Asp188. Phosphothreonine is present on Thr252.

This sequence belongs to the protein kinase superfamily. CAMK Ser/Thr protein kinase family. CaMK subfamily. In terms of assembly, interacts with sty1. Requires Mg(2+) as cofactor. Post-translationally, autophosphorylated.

The protein resides in the cytoplasm. The protein localises to the barrier septum. It is found in the forespore membrane. It localises to the ascus epiplasm. It carries out the reaction L-seryl-[protein] + ATP = O-phospho-L-seryl-[protein] + ADP + H(+). It catalyses the reaction L-threonyl-[protein] + ATP = O-phospho-L-threonyl-[protein] + ADP + H(+). In terms of biological role, has a role in the regulation of G2/M transition during the mitotic cell cycle. The polypeptide is Calcium/calmodulin-dependent protein kinase type II (Schizosaccharomyces pombe (strain 972 / ATCC 24843) (Fission yeast)).